Here is a 275-residue protein sequence, read N- to C-terminus: MPSNICKFFLTWWLIQQVTGLTGPLMLDTAPNAFDDQYEGCVNKMEEKAPLLLKEDFNKSEKLKVAWEEAKKRWNNIKPSMSYPKGFNDFHGTALVAYTGSIGVDFNRAVREFKENPGQFHYKAFHYYLTRALQLLSNGDCHSVYRGTKTRFHYTGAGSVRFGQFTSSSLSKTVAQSPEFFSDDGTLFIIKTCLGVYIKEFSFYPDQEEVLIPGYEVYQKVRTQGYNEIFLDSPKRKKSNYNCLYSSAGTRESCVSLFLVVLTSLLVQLLCLAEP.

The N-terminal stretch at 1 to 20 (MPSNICKFFLTWWLIQQVTG) is a signal peptide. Intrachain disulfides connect Cys-41–Cys-243 and Cys-141–Cys-193. Asn-58 carries N-linked (GlcNAc...) asparagine glycosylation. Residues 61–238 (EKLKVAWEEA…IFLDSPKRKK (178 aa)) form the TR mART core domain. NAD(+)-binding residues include Tyr-98, Arg-146, and Gln-164. Arg-146 is a catalytic residue. The active site involves Ser-167. Ser-202 serves as a coordination point for NAD(+). The active site involves Glu-209. The GPI-anchor amidated serine moiety is linked to residue Ser-246. A propeptide spans 247-275 (SAGTRESCVSLFLVVLTSLLVQLLCLAEP) (removed in mature form).

Belongs to the Arg-specific ADP-ribosyltransferase family. Postthymic T-cells.

The protein localises to the cell membrane. It catalyses the reaction L-arginyl-[protein] + NAD(+) = N(omega)-(ADP-D-ribosyl)-L-arginyl-[protein] + nicotinamide + H(+). The enzyme catalyses NAD(+) + H2O = ADP-D-ribose + nicotinamide + H(+). Functionally, has NAD(+) glycohydrolase activity and extremely low ADP-ribosyltransferase activity. This is T-cell ecto-ADP-ribosyltransferase 1 (Art2a) from Rattus norvegicus (Rat).